Reading from the N-terminus, the 375-residue chain is Peptidyl-prolyl cis-trans isomerase D (375 aa).

A PPIase cyclophilin-type domain is found at 7–169; the sequence is YFDITIANEP…QEVTISSAGV (163 aa). TPR repeat units lie at residues 217–250, 270–307, and 312–345; these read AGKL…LDVH, LPLL…PNLS, and GKAL…VPGD.

This sequence belongs to the cyclophilin-type PPIase family. PPIase D subfamily.

It localises to the cytoplasm. It catalyses the reaction [protein]-peptidylproline (omega=180) = [protein]-peptidylproline (omega=0). PPIases accelerate the folding of proteins. It catalyzes the cis-trans isomerization of proline imidic peptide bonds in oligopeptides. The protein is Peptidyl-prolyl cis-trans isomerase D (CPR6) of Cryptococcus neoformans var. neoformans serotype D (strain B-3501A) (Filobasidiella neoformans).